Consider the following 201-residue polypeptide: Fas apoptotic inhibitory molecule 1 (201 aa).

This sequence belongs to the FAIM1 family.

It is found in the cytoplasm. Plays a role as an inducible effector molecule that mediates Fas resistance produced by surface Ig engagement in B cells. This chain is Fas apoptotic inhibitory molecule 1 (Faim), found in Rattus norvegicus (Rat).